The following is a 219-amino-acid chain: Octanoyltransferase (219 aa).

The 176-residue stretch at 32-207 (ASSPDQLWIV…TFSHNLGYQN (176 aa)) folds into the BPL/LPL catalytic domain. Residues 71–78 (RGGQVTYH), 138–140 (SLG), and 151–153 (GLA) each bind substrate. Cys169 acts as the Acyl-thioester intermediate in catalysis.

Belongs to the LipB family.

It localises to the cytoplasm. The enzyme catalyses octanoyl-[ACP] + L-lysyl-[protein] = N(6)-octanoyl-L-lysyl-[protein] + holo-[ACP] + H(+). It functions in the pathway protein modification; protein lipoylation via endogenous pathway; protein N(6)-(lipoyl)lysine from octanoyl-[acyl-carrier-protein]: step 1/2. Functionally, catalyzes the transfer of endogenously produced octanoic acid from octanoyl-acyl-carrier-protein onto the lipoyl domains of lipoate-dependent enzymes. Lipoyl-ACP can also act as a substrate although octanoyl-ACP is likely to be the physiological substrate. The sequence is that of Octanoyltransferase from Shewanella sediminis (strain HAW-EB3).